We begin with the raw amino-acid sequence, 775 residues long: Dipeptidyl peptidase 4 (775 aa).

A signal peptide spans Met1–Ala15. N-linked (GlcNAc...) asparagine glycans are attached at residues Asn81, Asn111, Asn170, and Asn219. Residues Ser613, Asp690, and His725 each act as charge relay system in the active site.

It belongs to the peptidase S9B family.

The protein localises to the secreted. It catalyses the reaction Release of an N-terminal dipeptide, Xaa-Yaa-|-Zaa-, from a polypeptide, preferentially when Yaa is Pro, provided Zaa is neither Pro nor hydroxyproline.. Functionally, extracellular dipeptidyl-peptidase which removes N-terminal dipeptides sequentially from polypeptides having unsubstituted N-termini provided that the penultimate residue is proline. Contributes to pathogenicity. In Trichophyton tonsurans (Scalp ringworm fungus), this protein is Dipeptidyl peptidase 4 (DPP4).